The sequence spans 153 residues: Putative WASP homolog-associated protein with actin, membranes and microtubules-like protein 1 (153 aa).

A coiled-coil region spans residues 113 to 151 (AIQFYEIQLELYEVKFEILKNKEILLTTQLDSLERLIKD).

The polypeptide is Putative WASP homolog-associated protein with actin, membranes and microtubules-like protein 1 (WHAMMP3) (Homo sapiens (Human)).